Here is a 412-residue protein sequence, read N- to C-terminus: Acetate kinase (412 aa).

Residue asparagine 10 coordinates Mg(2+). Lysine 17 contributes to the ATP binding site. The segment at 40-61 (ETSRLAHTPSAGGGAEPRERTG) is disordered. Residue arginine 95 participates in substrate binding. The active-site Proton donor/acceptor is aspartate 152. ATP contacts are provided by residues 212–216 (HLGNG), 286–288 (DMR), and 334–338 (GVGEN). Glutamate 388 contributes to the Mg(2+) binding site.

The protein belongs to the acetokinase family. In terms of assembly, homodimer. The cofactor is Mg(2+). Requires Mn(2+) as cofactor.

It is found in the cytoplasm. The enzyme catalyses acetate + ATP = acetyl phosphate + ADP. It participates in metabolic intermediate biosynthesis; acetyl-CoA biosynthesis; acetyl-CoA from acetate: step 1/2. In terms of biological role, catalyzes the formation of acetyl phosphate from acetate and ATP. Can also catalyze the reverse reaction. This is Acetate kinase from Streptomyces griseus subsp. griseus (strain JCM 4626 / CBS 651.72 / NBRC 13350 / KCC S-0626 / ISP 5235).